The following is a 332-amino-acid chain: Glycerol-3-phosphate dehydrogenase [NAD(P)+] (332 aa).

NADPH is bound by residues Ser-15, Trp-16, and Lys-110. Positions 110, 137, and 139 each coordinate sn-glycerol 3-phosphate. Ala-141 is an NADPH binding site. The sn-glycerol 3-phosphate site is built by Lys-192, Asp-245, Ser-255, Arg-256, and Asn-257. The Proton acceptor role is filled by Lys-192. Arg-256 contacts NADPH. Glu-282 is a binding site for NADPH.

The protein belongs to the NAD-dependent glycerol-3-phosphate dehydrogenase family.

The protein localises to the cytoplasm. It catalyses the reaction sn-glycerol 3-phosphate + NAD(+) = dihydroxyacetone phosphate + NADH + H(+). The catalysed reaction is sn-glycerol 3-phosphate + NADP(+) = dihydroxyacetone phosphate + NADPH + H(+). It participates in membrane lipid metabolism; glycerophospholipid metabolism. Its function is as follows. Catalyzes the reduction of the glycolytic intermediate dihydroxyacetone phosphate (DHAP) to sn-glycerol 3-phosphate (G3P), the key precursor for phospholipid synthesis. This Coxiella burnetii (strain RSA 331 / Henzerling II) protein is Glycerol-3-phosphate dehydrogenase [NAD(P)+].